A 467-amino-acid polypeptide reads, in one-letter code: SEPTMSTRVQQATSCVLLIIGCTNYAASKQQTENNAVCDTPCKCLGRLAVQKAYLEGALEHARQSIKAFASSSRQHTIAAGATNTKLSGHHPNQGRRGRRRSSSARPNNSKGNSPSKRAGGAVRGETPASGRLKAAKLLKSSNYETATFTPTEMTIQNRRACEQVDESKEYRFDELNFDKEQGIPTPALTLEISMGCQKNPGDTGGACDGTNADDGVVTKLTFTTAAPVAETSPLVAGAYKKTSKASLSISNRTEEGRVANSKAAHEAAKRLMAIKQPSDLSTYTDDSSFALLVGQLAMKPPLGAELTPALRDQVNKFITDNYGANEGDFRSKFLAKTEQAAVFYLDGKSKKTKKISELESKSELVTASGYAFFKGIHTEQAEKVENPRSQGNPETAENKKEGGNTAKPFCSTIQNQTECEGVKGTPPTGKAKVCGWIEGKCQDSSFLLSKQFALSVVSAAFAALLF.

The span at 77–87 (TIAAGATNTKL) shows a compositional bias: polar residues. A disordered region spans residues 77 to 133 (TIAAGATNTKLSGHHPNQGRRGRRRSSSARPNNSKGNSPSKRAGGAVRGETPASGRL). The segment covering 93-103 (NQGRRGRRRSS) has biased composition (basic residues). Positions 107–116 (PNNSKGNSPS) are enriched in polar residues. N108 and N252 each carry an N-linked (GlcNAc...) asparagine glycan. A disordered region spans residues 382-407 (AEKVENPRSQGNPETAENKKEGGNTA). N416 is a glycosylation site (N-linked (GlcNAc...) asparagine). D444 carries GPI-anchor amidated aspartate lipidation. A propeptide spans 445-467 (SSFLLSKQFALSVVSAAFAALLF) (removed in mature form).

The protein localises to the cell membrane. In terms of biological role, VSG forms a coat on the surface of the parasite. The trypanosome evades the immune response of the host by expressing a series of antigenically distinct VSGs from an estimated 1000 VSG genes. In Trypanosoma brucei rhodesiense, this protein is Variant surface glycoprotein 7.